We begin with the raw amino-acid sequence, 781 residues long: Penicillin-binding protein 1B (781 aa).

The interval 151 to 322 is transglycosylase; the sequence is FRLAPKLIAM…SLYNPWRNPQ (172 aa). Glu-188 functions as the Proton donor; for transglycosylase activity in the catalytic mechanism. The interval 415–702 is transpeptidase; that stretch reads SQLQLKMKNP…ALQIYKDYLN (288 aa). Ser-466 acts as the Acyl-ester intermediate; for transpeptidase activity in catalysis. Residues 749–768 show a composition bias toward low complexity; sequence ETSSPSLTPTTETETPPQES. The segment at 749 to 781 is disordered; the sequence is ETSSPSLTPTTETETPPQESLWDVLDNPNPPAQ.

This sequence in the N-terminal section; belongs to the glycosyltransferase 51 family. In the C-terminal section; belongs to the transpeptidase family.

The protein localises to the cell inner membrane. It carries out the reaction [GlcNAc-(1-&gt;4)-Mur2Ac(oyl-L-Ala-gamma-D-Glu-L-Lys-D-Ala-D-Ala)](n)-di-trans,octa-cis-undecaprenyl diphosphate + beta-D-GlcNAc-(1-&gt;4)-Mur2Ac(oyl-L-Ala-gamma-D-Glu-L-Lys-D-Ala-D-Ala)-di-trans,octa-cis-undecaprenyl diphosphate = [GlcNAc-(1-&gt;4)-Mur2Ac(oyl-L-Ala-gamma-D-Glu-L-Lys-D-Ala-D-Ala)](n+1)-di-trans,octa-cis-undecaprenyl diphosphate + di-trans,octa-cis-undecaprenyl diphosphate + H(+). The enzyme catalyses Preferential cleavage: (Ac)2-L-Lys-D-Ala-|-D-Ala. Also transpeptidation of peptidyl-alanyl moieties that are N-acyl substituents of D-alanine.. It functions in the pathway cell wall biogenesis; peptidoglycan biosynthesis. Cell wall formation. Synthesis of cross-linked peptidoglycan from the lipid intermediates. The enzyme has a penicillin-insensitive transglycosylase N-terminal domain (formation of linear glycan strands) and a penicillin-sensitive transpeptidase C-terminal domain (cross-linking of the peptide subunits). This Haemophilus influenzae (strain ATCC 51907 / DSM 11121 / KW20 / Rd) protein is Penicillin-binding protein 1B (mrcB).